The chain runs to 205 residues: Small ribosomal subunit protein uS4c (205 aa).

The tract at residues 16–40 (GKLPSLTNKTSKKRKSPGQPATSFK) is disordered. Residues 93 to 161 (MRLDNIVHRI…IQKNIESKEL (69 aa)) form the S4 RNA-binding domain.

The protein belongs to the universal ribosomal protein uS4 family. In terms of assembly, part of the 30S ribosomal subunit. Contacts protein S5. The interaction surface between S4 and S5 is involved in control of translational fidelity.

It localises to the plastid. Its subcellular location is the chloroplast. Its function is as follows. One of the primary rRNA binding proteins, it binds directly to 16S rRNA where it nucleates assembly of the body of the 30S subunit. In terms of biological role, with S5 and S12 plays an important role in translational accuracy. The sequence is that of Small ribosomal subunit protein uS4c (rps4) from Euglena gracilis.